Here is a 259-residue protein sequence, read N- to C-terminus: tRNA pseudouridine synthase A (259 aa).

Aspartate 52 (nucleophile) is an active-site residue. Substrate is bound at residue tyrosine 113.

This sequence belongs to the tRNA pseudouridine synthase TruA family. As to quaternary structure, homodimer.

It carries out the reaction uridine(38/39/40) in tRNA = pseudouridine(38/39/40) in tRNA. Its function is as follows. Formation of pseudouridine at positions 38, 39 and 40 in the anticodon stem and loop of transfer RNAs. The chain is tRNA pseudouridine synthase A from Allorhizobium ampelinum (strain ATCC BAA-846 / DSM 112012 / S4) (Agrobacterium vitis (strain S4)).